Consider the following 173-residue polypeptide: Crossover junction endodeoxyribonuclease RuvC (173 aa).

Residues aspartate 8, glutamate 67, and aspartate 139 contribute to the active site. Mg(2+)-binding residues include aspartate 8, glutamate 67, and aspartate 139.

The protein belongs to the RuvC family. In terms of assembly, homodimer which binds Holliday junction (HJ) DNA. The HJ becomes 2-fold symmetrical on binding to RuvC with unstacked arms; it has a different conformation from HJ DNA in complex with RuvA. In the full resolvosome a probable DNA-RuvA(4)-RuvB(12)-RuvC(2) complex forms which resolves the HJ. The cofactor is Mg(2+).

It is found in the cytoplasm. The enzyme catalyses Endonucleolytic cleavage at a junction such as a reciprocal single-stranded crossover between two homologous DNA duplexes (Holliday junction).. Its function is as follows. The RuvA-RuvB-RuvC complex processes Holliday junction (HJ) DNA during genetic recombination and DNA repair. Endonuclease that resolves HJ intermediates. Cleaves cruciform DNA by making single-stranded nicks across the HJ at symmetrical positions within the homologous arms, yielding a 5'-phosphate and a 3'-hydroxyl group; requires a central core of homology in the junction. The consensus cleavage sequence is 5'-(A/T)TT(C/G)-3'. Cleavage occurs on the 3'-side of the TT dinucleotide at the point of strand exchange. HJ branch migration catalyzed by RuvA-RuvB allows RuvC to scan DNA until it finds its consensus sequence, where it cleaves and resolves the cruciform DNA. The sequence is that of Crossover junction endodeoxyribonuclease RuvC from Salmonella agona (strain SL483).